The sequence spans 134 residues: MKAFSPVRSVRKNSLSDHSLGISRSKTPVDDPMSLLYNMNDCYSKLKELVPSIPQNKKVSKMEILQHVIDYILDLQIALDSHPTIVSLHHQRPGQSQASRTPLTTLNTDISILSLQASEFPSELMSSDSKALCG.

Residues S14 and S25 each carry the phosphoserine modification. The bHLH domain maps to 23-75; the sequence is SRSKTPVDDPMSLLYNMNDCYSKLKELVPSIPQNKKVSKMEILQHVIDYILDL. A Nuclear export signal motif is present at residues 106–115; the sequence is LNTDISILSL.

In terms of assembly, interacts with GATA4 and NKX2-5. Interacts with NR0B2. Interacts with CLOCK and BMAL1. Interacts with IFI204. Interacts with NEDD9/HEF1. Interacts with ASB4; this interaction promotes ID2 proteasomal degradation. Post-translationally, ubiquitinated in a ASB4-depedent manner, leading to proteasomal degradation. In terms of processing, phosphorylated in vitro by CDK1, PKA and PKC.

It localises to the cytoplasm. Its subcellular location is the nucleus. Functionally, transcriptional regulator (lacking a basic DNA binding domain) which negatively regulates the basic helix-loop-helix (bHLH) transcription factors by forming heterodimers and inhibiting their DNA binding and transcriptional activity. Implicated in regulating a variety of cellular processes, including cellular growth, senescence, differentiation, apoptosis, angiogenesis, and neoplastic transformation. Inhibits skeletal muscle and cardiac myocyte differentiation. Regulates the circadian clock by repressing the transcriptional activator activity of the CLOCK-BMAL1 heterodimer. Restricts the CLOCK and BMAL1 localization to the cytoplasm. Plays a role in both the input and output pathways of the circadian clock: in the input component, is involved in modulating the magnitude of photic entrainment and in the output component, contributes to the regulation of a variety of liver clock-controlled genes involved in lipid metabolism. This chain is DNA-binding protein inhibitor ID-2 (ID2), found in Sus scrofa (Pig).